We begin with the raw amino-acid sequence, 396 residues long: MAKEKFERNKPHCNIGTIGHVDHGKTSLTAAITKVLAETGGATYSAYDQIDKAPEEKARGITISTAHVEYQTEARHYAHVDCPGHADYVKNMITGAAQMDGAILVVSAADGPMPQTREHILLARQVGVPALVVFMNKVDQVDDPELLELVEMEIRELLSSYDFPGDDIPIVKGSALAALEDSNKEIGHDAILELMKAVDAYIPQPERPKNLPFLMPIEDVFSISGRGTVVTGRIERGVVKVGEEIEIVGIKPTVKTTCTGVEMFRKLLDQGEAGDNVGVLLRGTKREDVERGQVLCAPGSITPHTEFEAEAYILTKEEGGRHTPFFTNYRPQFYFRTTDVTGVVTLPEGTEMVMPGDNVKMNVTLIAPIAMEEKLRFAIREGGRTVGAGVVSKVLK.

In terms of domain architecture, tr-type G spans 10-206 (KPHCNIGTIG…AVDAYIPQPE (197 aa)). Residues 19–26 (GHVDHGKT) form a G1 region. Residue 19-26 (GHVDHGKT) participates in GTP binding. T26 provides a ligand contact to Mg(2+). The tract at residues 60-64 (GITIS) is G2. The G3 stretch occupies residues 81–84 (DCPG). Residues 81–85 (DCPGH) and 136–139 (NKVD) each bind GTP. The segment at 136 to 139 (NKVD) is G4. The G5 stretch occupies residues 174–176 (SAL).

Belongs to the TRAFAC class translation factor GTPase superfamily. Classic translation factor GTPase family. EF-Tu/EF-1A subfamily. As to quaternary structure, monomer.

The protein localises to the cytoplasm. The catalysed reaction is GTP + H2O = GDP + phosphate + H(+). In terms of biological role, GTP hydrolase that promotes the GTP-dependent binding of aminoacyl-tRNA to the A-site of ribosomes during protein biosynthesis. This Parvibaculum lavamentivorans (strain DS-1 / DSM 13023 / NCIMB 13966) protein is Elongation factor Tu.